We begin with the raw amino-acid sequence, 137 residues long: uncharacterized protein (137 aa).

5 helical membrane passes run 4 to 26 (AIIL…KIVC), 35 to 57 (IVVN…NIII), 62 to 84 (ILTY…YYAL), 89 to 111 (ASIV…ILFL), and 116 to 135 (TLPQ…LLSI). Positions 13–135 (VFYGVGTFFA…IIIGIILLSI (123 aa)) constitute an EamA domain.

Its subcellular location is the cell membrane. This is an uncharacterized protein from Methanocaldococcus jannaschii (strain ATCC 43067 / DSM 2661 / JAL-1 / JCM 10045 / NBRC 100440) (Methanococcus jannaschii).